Reading from the N-terminus, the 236-residue chain is DNA repair protein RecO (236 aa).

It belongs to the RecO family.

Its function is as follows. Involved in DNA repair and RecF pathway recombination. The protein is DNA repair protein RecO of Photobacterium profundum (strain SS9).